The primary structure comprises 553 residues: Dihydroxy-acid dehydratase (553 aa).

D78 serves as a coordination point for Mg(2+). C119 contacts [2Fe-2S] cluster. Mg(2+) is bound by residues D120 and K121. K121 bears the N6-carboxylysine mark. C193 lines the [2Fe-2S] cluster pocket. Position 441 (E441) interacts with Mg(2+). S467 serves as the catalytic Proton acceptor.

This sequence belongs to the IlvD/Edd family. Homodimer. [2Fe-2S] cluster serves as cofactor. Mg(2+) is required as a cofactor.

The enzyme catalyses (2R)-2,3-dihydroxy-3-methylbutanoate = 3-methyl-2-oxobutanoate + H2O. It catalyses the reaction (2R,3R)-2,3-dihydroxy-3-methylpentanoate = (S)-3-methyl-2-oxopentanoate + H2O. It participates in amino-acid biosynthesis; L-isoleucine biosynthesis; L-isoleucine from 2-oxobutanoate: step 3/4. Its pathway is amino-acid biosynthesis; L-valine biosynthesis; L-valine from pyruvate: step 3/4. In terms of biological role, functions in the biosynthesis of branched-chain amino acids. Catalyzes the dehydration of (2R,3R)-2,3-dihydroxy-3-methylpentanoate (2,3-dihydroxy-3-methylvalerate) into 2-oxo-3-methylpentanoate (2-oxo-3-methylvalerate) and of (2R)-2,3-dihydroxy-3-methylbutanoate (2,3-dihydroxyisovalerate) into 2-oxo-3-methylbutanoate (2-oxoisovalerate), the penultimate precursor to L-isoleucine and L-valine, respectively. The sequence is that of Dihydroxy-acid dehydratase from Geobacter sp. (strain M21).